The primary structure comprises 246 residues: MASATQLTHRGIHLAGLYRSSWSKPLFRHLATKPILYSYWPSSCSWRVRVALAIKKIDYDIKPTSLLKTVSGHAYTDEYREVNPMQKVPSLKIDGHTLCDSVAIIHYLEETRPQPALLPQDPVKRAKIREIVELICSGIQPLQNVSVLDHIGKDQSLQWAQHWISRGFQGLEKVLSHSAGKFCVGDELSMADICLVPQVRNARRYKADLTPYPTIVRLNQELQELDVFKATHPSTQPDCPPEFAKK.

In terms of domain architecture, GST N-terminal spans 32–116 (TKPILYSYWP…YLEETRPQPA (85 aa)). Residues 42–47 (SSCSWR), Val-88, 100–101 (DS), Gln-140, and 144–146 (NVS) contribute to the glutathione site. The GST C-terminal domain occupies 121-241 (DPVKRAKIRE…HPSTQPDCPP (121 aa)).

This sequence belongs to the GST superfamily. Zeta family. Glutathione serves as cofactor.

The protein resides in the cytoplasm. It carries out the reaction 4-maleylacetoacetate = 4-fumarylacetoacetate. The enzyme catalyses RX + glutathione = an S-substituted glutathione + a halide anion + H(+). It functions in the pathway amino-acid degradation; L-phenylalanine degradation; acetoacetate and fumarate from L-phenylalanine: step 5/6. In terms of biological role, catalyzes the glutathione dependent oxygenation of dichloroacetic acid to glyoxylic acid in vitro. Possesses low glutathione thioltransferase activity toward 4-hydroxynonenal (4-HNE). Has no glutathione thioltransferase activity with adrenochrome, phenethyl isothiocyanate (PEITC), 5-hydroperoxyeicosatetraenoic acid ((5S)-HpETE), prostaglandin A2 (PGA2) or 2-hydroxyethyldisulfide (HED). The sequence is that of Probable maleylacetoacetate isomerase 1 (GstZ1) from Drosophila melanogaster (Fruit fly).